The chain runs to 486 residues: Argininosuccinate lyase (486 aa).

It belongs to the lyase 1 family. Argininosuccinate lyase subfamily.

It is found in the cytoplasm. It carries out the reaction 2-(N(omega)-L-arginino)succinate = fumarate + L-arginine. The protein operates within amino-acid biosynthesis; L-arginine biosynthesis; L-arginine from L-ornithine and carbamoyl phosphate: step 3/3. This Acidovorax ebreus (strain TPSY) (Diaphorobacter sp. (strain TPSY)) protein is Argininosuccinate lyase.